The following is a 552-amino-acid chain: Tyrosine-protein kinase Src64B (552 aa).

In terms of domain architecture, SH3 spans 95–156; that stretch reads VLKRVVVALY…PLNFVAEERS (62 aa). In terms of domain architecture, SH2 spans 162–259; it reads WFFENVLRKE…GLCHILSRPC (98 aa). The region spanning 284–537 is the Protein kinase domain; it reads IQLLRKLGRG…TFEFLNHYFE (254 aa). ATP contacts are provided by residues 290-298 and lysine 312; that span reads LGRGNFGEV. Aspartate 404 (proton acceptor) is an active-site residue. Phosphotyrosine; by autocatalysis is present on tyrosine 434.

This sequence belongs to the protein kinase superfamily. Tyr protein kinase family. SRC subfamily. In terms of assembly, interacts with hzg. In terms of processing, phosphorylated. In terms of tissue distribution, after the first 8 hours of development, accumulates almost exclusively in neural tissues such as the brain, ventral nerve chord, and eye-antennal disks, and in differentiating smooth muscle.

The enzyme catalyses L-tyrosyl-[protein] + ATP = O-phospho-L-tyrosyl-[protein] + ADP + H(+). Tyrosine-protein kinase that may play a role in the development of neural tissue and smooth muscle. May contribute to tyrosine phosphorylation of Dscam1, a cell surface receptor involved in targeting of growing axons during eye morphogenesis. The protein is Tyrosine-protein kinase Src64B (Src64B) of Drosophila melanogaster (Fruit fly).